The chain runs to 162 residues: Transcription elongation factor GreA (162 aa).

Residues 45-74 (ENAEYEAAREKQAFIEGRIKELEDMTARAE) are a coiled coil.

Belongs to the GreA/GreB family.

Its function is as follows. Necessary for efficient RNA polymerase transcription elongation past template-encoded arresting sites. The arresting sites in DNA have the property of trapping a certain fraction of elongating RNA polymerases that pass through, resulting in locked ternary complexes. Cleavage of the nascent transcript by cleavage factors such as GreA or GreB allows the resumption of elongation from the new 3'terminus. GreA releases sequences of 2 to 3 nucleotides. In Rickettsia felis (strain ATCC VR-1525 / URRWXCal2) (Rickettsia azadi), this protein is Transcription elongation factor GreA.